The chain runs to 532 residues: Probable cytochrome P450 524A1 (532 aa).

A helical transmembrane segment spans residues 8–28 (FIIFILLAALAVFVSEATSKV). Heme is bound at residue Cys478.

This sequence belongs to the cytochrome P450 family. Requires heme as cofactor.

The protein resides in the membrane. The chain is Probable cytochrome P450 524A1 (cyp524A1) from Dictyostelium discoideum (Social amoeba).